The sequence spans 369 residues: Protein pxr-1 (369 aa).

The interval 1–23 (MGLAAAKNKRKLGTDPNNTKWSR) is disordered. One can recognise a G-patch domain in the interval 25 to 79 (ETTFGQKILRAQGWQPGEFLGAKDAAHAVHHTEASSSHIKVTLKDDNLGLGAKRN). Residues 147–338 (EEDGVPQSDT…GTSTPTVTSS (192 aa)) are disordered. Residues 153 to 167 (QSDTVDQQVETVPSQ) are compositionally biased toward polar residues. Residues 218-227 (SKKKEKKDKK) show a composition bias toward basic residues. The span at 228-237 (EKKDQKEKKD) shows a compositional bias: basic and acidic residues. A compositionally biased stretch (basic residues) spans 267–292 (KSKKDKKKEKKEKKDKKKDKKEKKRK). Positions 304–318 (EDSKSKAQKRTKDGA) are enriched in basic and acidic residues. A compositionally biased stretch (low complexity) spans 322-338 (TSTPGGSGTSTPTVTSS).

It belongs to the PINX1 family.

It localises to the nucleus. The protein resides in the nucleolus. Functionally, involved in rRNA-processing at A0, A1 and A2 sites and negatively regulates telomerase. The chain is Protein pxr-1 (pxr-1) from Neurospora crassa (strain ATCC 24698 / 74-OR23-1A / CBS 708.71 / DSM 1257 / FGSC 987).